The following is a 191-amino-acid chain: uncharacterized protein (191 aa).

It to B.subtilis GlpP.

This is an uncharacterized protein from Escherichia coli (strain K12).